We begin with the raw amino-acid sequence, 1295 residues long: MEDGRPVWAPHPTEGFQMGNIVDIGPDSLTIEPLGQKGKTFLALINQVFPAEEDSKKDVEDNCSLMYLNEATLLHNIKVRYSKDRIYTYVANILIAVNPYFDIPKIYSSDSIKSYQGKSLGTMPPHVFAIADKAFRDMKVLKMSQSIIVSGESGAGKTENTKFVLRYLTESYGSGQDIDDRIVEANPLLEAFGNAKTVRNNNSSRFGKFVEIHFNEKSSVVGGFVSHYLLEKSRICVQGKEERNYHIFYRLCAGASEDIRERLHLSSPDNFRYLNRGCTRYFANKETDKQILQNRKTPEHLKAGSLKDPLLDDHGDFVRMCTAMKKIGLDDEEKLDLFRVVAGVLHLGNIDFEEAGSTSGGCNLKNKSTQSLEYCAELLGLDQDDLRVSLTTRVMLTTAGGTKGTVIKVPLKVEQANNARDALAKTVYSHLFDHVVNRVNQCFPFETSSYFIGVLDIAGFEYFEHNSFEQFCINYCNEKLQQFFNERILKEEQELYQKEGLGVNEVHYVDNQDCIDLIEAKLMGILDILDEENRLPQPSDQHFTSAVHQKHKDHFRLSIPRKSKLAVHRNIRDDEGFIVRHFAGAVCYETTQFVEKNNDALHMSLESLICESRDKFIRELFESSTNNNKDTKQKAGKLSFISVGNKFKTQLNLLLDKLRSTGASFIRCIKPNLKMTSHDFEGAQILSQLQCSGMVSVLDLMQGGFPSRASFHELYNMYKKYMPDKLARLDPRLFCKALFKALGLNEVDYKFGLTKVFFRPGKFAEFDQIMKSDPDHLAQLVKRVNHWLICSRWKKVQWCSLSVIKLKNKIKYRAEACIKMQKTIRMWLCKRRHKPRIDGLVKVGTLKKRLDKFNEVVSALKDGKAEMNKQVKDLEISIDALMAKIKSTMMTREQIQKEYDALVKSSEVLLSALQKKKQQEEEAERLRRIQEEMEKERKRREEDEQRRRKEEEERRMKLEMEAKRKQEEEERKKREDDEKRIQAEVEAQLARQREEESQQQAVLEQERRDRELALRIARSEAELIIDEAQADPAALRSLDFHPVTSKINGTRRTMTPEQMAKEMSEILSRGPAVQATKAAAGTKKHDLSKWKYAELRDTINTSCDIELLAACREEFHRRLKVYHAWKSKNKKRNTETEQRAPKSVTDYDFAPFLNNSPQQNPAAQLPARQQEIEMNRQQRFFRIPFIRPADQYKDPQNKKKGWWYAHFDGPWIARQMELHPDKPPILLVAGKDDMEMCELNLEETGLTRKRGAEILPRQFEEIWERCGGIQYLQSAIESRQARPTYATAMLQNLLK.

The Myosin N-terminal SH3-like domain maps to Glu-2–Glu-53. Residues Lys-57–Lys-771 enclose the Myosin motor domain. Gly-151–Thr-158 contacts ATP. At Ser-267 the chain carries Phosphoserine. The responsible for slow ATPase activity stretch occupies residues Tyr-273–Phe-317. Position 405 is a phosphothreonine (Thr-405). Ser-604 bears the Phosphoserine mark. The segment at Leu-651–Leu-673 is actin-binding. Residues Lys-782–Ile-810 form a required for binding calmodulin region. The IQ domain occupies Arg-813–Lys-842. The three-helix bundle stretch occupies residues Pro-835–Lys-916. The segment at Lys-917–Glu-984 is SAH. The interval Glu-934–Arg-955 is disordered. Positions Lys-1061–Ala-1286 are interaction with TAX1BP1 and CALCOCO2/NDP52. The interval Arg-1117 to Leu-1119 is interaction with OPTN. Ser-1156 bears the Phosphoserine mark. An interaction with TOM1 region spans residues Gln-1158 to Ala-1286.

It belongs to the TRAFAC class myosin-kinesin ATPase superfamily. Myosin family. Homodimer; dimerization seems to implicate the unfolding of the three-helix bundle region creating an additional calmodulin binding site, and cargo binding. Able to function as a monomer under specific conditions in vitro. Forms a complex with CFTR and DAB2 in the apical membrane of epithelial cells. Component of the DISP/DOCK7-induced septin displacement complex, at least composed of DOCK7, LRCH3 and MYO6. Binding to calmodulin through a unique insert, not found in other myosins, located in the neck region between the motor domain and the IQ domain appears to contribute to the directionality reversal. This interaction occurs only if the C-terminal lobe of calmodulin is occupied by calcium. Interaction with F-actin/ACTN1 occurs only at the apical brush border domain of the proximal tubule cells. Interacts with DAB2. In vitro, the C-terminal globular tail binds a C-terminal region of DAB2. Interacts with CFTR. Interacts with CABP5. Interacts (via residues 1158-1286) with TOM1 (via residues 392-463). Interacts (via residues 1060-1285) with OPTN. Interacts (via residues 1060-1285) with TAX1BP1 and CALCOCO2/NDP52. Interacts with TOM1L2. Interacts with CLIC5; may work together in a complex which also includes RDX and MYO6 to stabilize linkages between the plasma membrane and subjacent actin cytoskeleton at the base of stereocilia. Phosphorylation in the motor domain, induced by EGF, results in translocation of MYO6 from the cell surface to membrane ruffles and affects F-actin dynamics. Phosphorylated in vitro by p21-activated kinase (PAK). As to expression, expressed in the retina (at protein level).

Its subcellular location is the golgi apparatus. It localises to the trans-Golgi network membrane. The protein localises to the nucleus. The protein resides in the cytoplasm. It is found in the perinuclear region. Its subcellular location is the membrane. It localises to the clathrin-coated pit. The protein localises to the cytoplasmic vesicle. The protein resides in the clathrin-coated vesicle. It is found in the cell projection. Its subcellular location is the filopodium. It localises to the ruffle membrane. The protein localises to the microvillus. The protein resides in the cytosol. Myosins are actin-based motor molecules with ATPase activity. Unconventional myosins serve in intracellular movements. Myosin 6 is a reverse-direction motor protein that moves towards the minus-end of actin filaments. Has slow rate of actin-activated ADP release due to weak ATP binding. Functions in a variety of intracellular processes such as vesicular membrane trafficking and cell migration. Required for the structural integrity of the Golgi apparatus via the p53-dependent pro-survival pathway. Appears to be involved in a very early step of clathrin-mediated endocytosis in polarized epithelial cells. Together with TOM1, mediates delivery of endocytic cargo to autophagosomes thereby promoting autophagosome maturation and driving fusion with lysosomes. Links TOM1 with autophagy receptors, such as TAX1BP1; CALCOCO2/NDP52 and OPTN. May act as a regulator of F-actin dynamics. As part of the DISP complex, may regulate the association of septins with actin and thereby regulate the actin cytoskeleton. May play a role in transporting DAB2 from the plasma membrane to specific cellular targets. May play a role in the extension and network organization of neurites. Required for structural integrity of inner ear hair cells. Required for the correct localization of CLIC5 and RDX at the stereocilium base. Modulates RNA polymerase II-dependent transcription. In Bos taurus (Bovine), this protein is Unconventional myosin-VI.